The following is a 256-amino-acid chain: MYRYKITFAYDGTNFSGFQIQPNKRTVEQTLKNAVNKIAKHPTPAIPVIGSGRTDAGVHALNQVAHFDIPYHLSNESMRKALNSILPLDILIKKAELVDNDFHARYSAHRKTYRYRVDQGEFVNPFKRNYTSHFKYPLNLEKMRKAADDLVGTHDFTSFVASGSQAKSNVRTIENITIKRDEVRNEVVFDFTGNGFLYNQVRIMVAFLLEIGSNQRPVDDVSRVLKAKDRTLARMTAPASGLYLVNVDYGTNDEKD.

Asp55 serves as the catalytic Nucleophile. Tyr113 provides a ligand contact to substrate.

Belongs to the tRNA pseudouridine synthase TruA family. As to quaternary structure, homodimer.

The enzyme catalyses uridine(38/39/40) in tRNA = pseudouridine(38/39/40) in tRNA. Its function is as follows. Formation of pseudouridine at positions 38, 39 and 40 in the anticodon stem and loop of transfer RNAs. The protein is tRNA pseudouridine synthase A of Limosilactobacillus reuteri (strain DSM 20016) (Lactobacillus reuteri).